The chain runs to 933 residues: 2-oxoglutarate dehydrogenase E1 component (933 aa).

This sequence belongs to the alpha-ketoglutarate dehydrogenase family. Homodimer. Part of the 2-oxoglutarate dehydrogenase (OGDH) complex composed of E1 (2-oxoglutarate dehydrogenase), E2 (dihydrolipoamide succinyltransferase) and E3 (dihydrolipoamide dehydrogenase); the complex contains multiple copies of the three enzymatic components (E1, E2 and E3). Interacts (via N-terminus) with SucB, the E2 component of OGDH complex. It depends on thiamine diphosphate as a cofactor.

The catalysed reaction is N(6)-[(R)-lipoyl]-L-lysyl-[protein] + 2-oxoglutarate + H(+) = N(6)-[(R)-S(8)-succinyldihydrolipoyl]-L-lysyl-[protein] + CO2. Its function is as follows. E1 component of the 2-oxoglutarate dehydrogenase (OGDH) complex which catalyzes the decarboxylation of 2-oxoglutarate, the first step in the conversion of 2-oxoglutarate to succinyl-CoA and CO(2). The chain is 2-oxoglutarate dehydrogenase E1 component (sucA) from Escherichia coli O157:H7.